A 106-amino-acid chain; its full sequence is Large ribosomal subunit protein uL24 (106 aa).

This sequence belongs to the universal ribosomal protein uL24 family. Part of the 50S ribosomal subunit.

Its function is as follows. One of two assembly initiator proteins, it binds directly to the 5'-end of the 23S rRNA, where it nucleates assembly of the 50S subunit. Functionally, one of the proteins that surrounds the polypeptide exit tunnel on the outside of the subunit. The polypeptide is Large ribosomal subunit protein uL24 (Paracidovorax citrulli (strain AAC00-1) (Acidovorax citrulli)).